We begin with the raw amino-acid sequence, 423 residues long: Cyclin-dependent kinase 14 (423 aa).

Residues 62–85 (VGKESPKVRRHSSPSSPTSPKFGK) form a disordered region. One can recognise a Protein kinase domain in the interval 89–373 (YEKLEKLGEG…AQAALNHDYF (285 aa)). ATP contacts are provided by residues 95 to 103 (LGEGSYATV) and Lys118. Residue Asp210 is the Proton acceptor of the active site.

Belongs to the protein kinase superfamily. CMGC Ser/Thr protein kinase family. CDC2/CDKX subfamily. Interacts with ccny; ccny mediates its recruitment to the plasma membrane and promotes phosphorylation of lrp6.

It is found in the cell membrane. It catalyses the reaction L-seryl-[protein] + ATP = O-phospho-L-seryl-[protein] + ADP + H(+). The enzyme catalyses L-threonyl-[protein] + ATP = O-phospho-L-threonyl-[protein] + ADP + H(+). Its function is as follows. Serine/threonine-protein kinase involved in the control of the eukaryotic cell cycle, whose activity is controlled by an associated cyclin. Acts as a cell-cycle regulator of Wnt signaling pathway during G2/M phase by mediating the phosphorylation of lrp6, leading to the activation of the Wnt signaling pathway. The polypeptide is Cyclin-dependent kinase 14 (cdk14) (Xenopus tropicalis (Western clawed frog)).